Reading from the N-terminus, the 1078-residue chain is Exportin-1 (1078 aa).

One can recognise an Importin N-terminal domain in the interval 34–100 (AQQVLTQFQA…RNYIVAVMIK (67 aa)).

This sequence belongs to the exportin family. Interacts with php4.

The protein localises to the nucleus. In terms of biological role, receptor for the leucine-rich nuclear export signal (NES). The protein is Exportin-1 (xpo1) of Schizosaccharomyces pombe (strain 972 / ATCC 24843) (Fission yeast).